The sequence spans 112 residues: Urease subunit gamma (112 aa).

The protein belongs to the urease gamma subunit family. In terms of assembly, heterotrimer of UreA (gamma), UreB (beta) and UreC (alpha) subunits. Three heterotrimers associate to form the active enzyme.

It localises to the cytoplasm. It carries out the reaction urea + 2 H2O + H(+) = hydrogencarbonate + 2 NH4(+). The protein operates within nitrogen metabolism; urea degradation; CO(2) and NH(3) from urea (urease route): step 1/1. The protein is Urease subunit gamma of Gloeothece citriformis (strain PCC 7424) (Cyanothece sp. (strain PCC 7424)).